The chain runs to 474 residues: Rhodanese-like domain-containing protein 7 (474 aa).

Disordered regions lie at residues S20 to K68 and V179 to A198. A compositionally biased stretch (low complexity) spans Q53 to K68. In terms of domain architecture, Rhodanese spans S245–S368. The Cysteine persulfide intermediate role is filled by C328. Positions R432–I474 are disordered.

This chain is Rhodanese-like domain-containing protein 7 (STR7), found in Arabidopsis thaliana (Mouse-ear cress).